Reading from the N-terminus, the 247-residue chain is Neurotrophic factor BDNF precursor form (247 aa).

Positions 1-18 are cleaved as a signal peptide; that stretch reads MTILFLTMVISYFGCMKA. The propeptide occupies 19–128; that stretch reads APMKEANARG…AANMSMRVRR (110 aa). N-linked (GlcNAc...) asparagine glycosylation occurs at Asn121. 3 disulfides stabilise this stretch: Cys141/Cys208, Cys186/Cys237, and Cys196/Cys239.

Belongs to the NGF-beta family. In terms of assembly, monomers and homodimers. Binds to NTRK2/TRKB. Can form heterodimers with other neurotrophin family members, such as NTF3 and NTF4 (in vitro), but the physiological relevance of this is not clear. BDNF precursor form: interacts with the heterodimer formed by NGFR and SORCS2. Mature BDNF has much lower affinity for the heterodimer formed by NGFR and SORCS2. N-glycosylated and glycosulfated, contrary to mature BDNF. Post-translationally, mature BDNF is produced by proteolytic removal of the propeptide, catalyzed by a FURIN family member. In addition, the precursor form is proteolytically cleaved within the propeptide, but this is not an obligatory intermediate for the production of mature BDNF. Can be converted into mature BDNF by plasmin (PLG).

The protein resides in the secreted. Its function is as follows. Important signaling molecule that activates signaling cascades downstream of NTRK2. During development, promotes the survival and differentiation of selected neuronal populations of the peripheral and central nervous systems. Participates in axonal growth, pathfinding and in the modulation of dendritic growth and morphology. Major regulator of synaptic transmission and plasticity at adult synapses in many regions of the CNS. The versatility of BDNF is emphasized by its contribution to a range of adaptive neuronal responses including long-term potentiation (LTP), long-term depression (LTD), certain forms of short-term synaptic plasticity, as well as homeostatic regulation of intrinsic neuronal excitability. In terms of biological role, important signaling molecule that activates signaling cascades downstream of NTRK2. Activates signaling cascades via the heterodimeric receptor formed by NGFR and SORCS2. Signaling via NGFR and SORCS2 plays a role in synaptic plasticity and long-term depression (LTD). Binding to NGFR and SORCS2 promotes neuronal apoptosis. Promotes neuronal growth cone collapse. The protein is Neurotrophic factor BDNF precursor form (BDNF) of Equus caballus (Horse).